We begin with the raw amino-acid sequence, 280 residues long: Trypsin zeta (280 aa).

Residues 1 to 22 form the signal peptide; sequence MSSSWIVGLLAFLVSLVALTQG. The propeptide at 23–38 is activation peptide; that stretch reads LPLLEDLDEKSVPDGR. In terms of domain architecture, Peptidase S1 spans 39-278; that stretch reads IVGGYATDIA…LRPWIDAVLA (240 aa). An intrachain disulfide couples cysteine 72 to cysteine 88. Residues histidine 87 and aspartate 134 each act as charge relay system in the active site. Cystine bridges form between cysteine 198/cysteine 218 and cysteine 230/cysteine 254. Serine 234 serves as the catalytic Charge relay system.

Belongs to the peptidase S1 family.

The protein resides in the secreted. Its subcellular location is the extracellular space. The enzyme catalyses Preferential cleavage: Arg-|-Xaa, Lys-|-Xaa.. The chain is Trypsin zeta (zetaTry) from Drosophila melanogaster (Fruit fly).